The following is a 471-amino-acid chain: Mannose-1-phosphate guanylyltransferase (471 aa).

Belongs to the mannose-6-phosphate isomerase type 2 family.

The enzyme catalyses alpha-D-mannose 1-phosphate + GTP + H(+) = GDP-alpha-D-mannose + diphosphate. The protein operates within nucleotide-sugar biosynthesis; GDP-alpha-D-mannose biosynthesis; GDP-alpha-D-mannose from alpha-D-mannose 1-phosphate (GTP route): step 1/1. Involved in GDP-mannose biosynthesis which serves as the activated sugar nucleotide precursor for mannose residues in cell surface polysaccharides. This enzyme participates in synthesis of the LPS O antigen. The protein is Mannose-1-phosphate guanylyltransferase (manC) of Salmonella montevideo.